A 370-amino-acid polypeptide reads, in one-letter code: METQKKIHVGMLFGGNSSEHDVSKRSAHNIYDAMDKNKYEIDLFLITKNGIVLSDAATRRVFDGEPEDQVVAEEMPKLDMSDPLAPIKNLTLAKDIDIFYPVVHGNLGEDGTLQGLFKLLKKPYVGSGVLASAASFDKDITKQILTHHHIQNTKYVVVTPENRDQMTYAYLQAHVGDHLFIKPANQGSSIGIHKAENEQEYLDGLADAFKYDYKILVEESIDNPREVECSILGNENPKASKLGAIDVPKTDTFYDYNNKFVDASGVTFELPVELPADLTKRIQQMSLDAFKALGLKGMARVDFLVSEDGEPYLGEINTLPGFTNISLYPKLWEVSGISYTALIDQLIQLGFDEFKRQSDIHYDFVALDAE.

An ATP-grasp domain is found at lysine 142–glutamine 348. Residue glutamine 172 to valine 227 coordinates ATP. 3 residues coordinate Mg(2+): aspartate 302, glutamate 315, and asparagine 317.

This sequence belongs to the D-alanine--D-alanine ligase family. It depends on Mg(2+) as a cofactor. Mn(2+) serves as cofactor.

It is found in the cytoplasm. The enzyme catalyses 2 D-alanine + ATP = D-alanyl-D-alanine + ADP + phosphate + H(+). It functions in the pathway cell wall biogenesis; peptidoglycan biosynthesis. Its function is as follows. Cell wall formation. In Lactiplantibacillus plantarum (strain ATCC BAA-793 / NCIMB 8826 / WCFS1) (Lactobacillus plantarum), this protein is D-alanine--D-alanine ligase.